The chain runs to 217 residues: Thymidylate kinase (217 aa).

Residue 11–18 coordinates ATP; it reads GLEGAGKS.

The protein belongs to the thymidylate kinase family.

The enzyme catalyses dTMP + ATP = dTDP + ADP. Its function is as follows. Phosphorylation of dTMP to form dTDP in both de novo and salvage pathways of dTTP synthesis. The sequence is that of Thymidylate kinase from Alkalilimnicola ehrlichii (strain ATCC BAA-1101 / DSM 17681 / MLHE-1).